The sequence spans 281 residues: DegV domain-containing protein spr0652 (281 aa).

One can recognise a DegV domain in the interval 3–280 (WKIIADSGCD…EGGLLMGYEI (278 aa)). Hexadecanoate is bound by residues Ser-63 and Ser-91.

In terms of biological role, may bind long-chain fatty acids, such as palmitate, and may play a role in lipid transport or fatty acid metabolism. This Streptococcus pneumoniae (strain ATCC BAA-255 / R6) protein is DegV domain-containing protein spr0652.